The sequence spans 61 residues: Small ribosomal subunit protein uS14 (61 aa).

Zn(2+) contacts are provided by cysteine 24, cysteine 27, cysteine 40, and cysteine 43.

The protein belongs to the universal ribosomal protein uS14 family. Zinc-binding uS14 subfamily. In terms of assembly, part of the 30S ribosomal subunit. Contacts proteins S3 and S10. The cofactor is Zn(2+).

Binds 16S rRNA, required for the assembly of 30S particles and may also be responsible for determining the conformation of the 16S rRNA at the A site. The sequence is that of Small ribosomal subunit protein uS14 from Limosilactobacillus fermentum (strain NBRC 3956 / LMG 18251) (Lactobacillus fermentum).